We begin with the raw amino-acid sequence, 709 residues long: Protein IMPAIRED IN BABA-INDUCED STERILITY 1 (709 aa).

Residue Gly2 is the site of N-myristoyl glycine attachment. Positions 53–80 are disordered; it reads SGKKSSSKKSGSELGSDFGELSESGRAS. The Protein kinase domain maps to 131–418; it reads FEKLEKIGQG…ASTALVSQYF (288 aa). ATP-binding positions include 137-145 and Lys160; that span reads IGQGTYSSV. Catalysis depends on Asp255, which acts as the Proton acceptor. 2 disordered regions span residues 434-536 and 566-609; these read SPSK…PFSG and SRGH…QDRE. The span at 437–449 shows a compositional bias: basic and acidic residues; it reads KEIDAKHREDTTR. Basic residues predominate over residues 484–494; it reads HSQKFQKRNGH. Positions 495–505 are enriched in polar residues; it reads SVHNSIDSDST. Basic and acidic residues-rich tracts occupy residues 509–523 and 586–609; these read KMQK…EASH and VDSK…QDRE.

The protein belongs to the protein kinase superfamily. Ser/Thr protein kinase family.

Its function is as follows. Required for beta-aminobutyric acid (BABA)-induced resistance (BABA-IR) against bacteria (e.g. P.syringae) and oomycetes (e.g. H.parasitica) via priming for salicylate (SA)-dependent defense responses such as pathogenesis-related PR-1 gene expression and trailing necrosis. Involved in BABA-mediated sterility. Necessary for the inheritance of BABA-priming to next generation, especially for the primed to be primed phenotype which consists in an enhanced second BABA-priming in transgenerationally primed plants. In Arabidopsis thaliana (Mouse-ear cress), this protein is Protein IMPAIRED IN BABA-INDUCED STERILITY 1.